The sequence spans 459 residues: Bifunctional protein GlmU (459 aa).

Residues 1-230 are pyrophosphorylase; the sequence is MVKRYAVILA…FDETIGINDR (230 aa). UDP-N-acetyl-alpha-D-glucosamine-binding positions include 9–12, Lys23, Gln73, and 78–79; these read LAAG and GT. A Mg(2+)-binding site is contributed by Asp103. The UDP-N-acetyl-alpha-D-glucosamine site is built by Gly140, Glu155, Asn170, and Asn228. Asn228 lines the Mg(2+) pocket. The interval 231–251 is linker; sequence IALAEAERIMRDRICRQHMKN. The interval 252-459 is N-acetyltransferase; the sequence is GVTIIDPACT…VDRLRGKKKS (208 aa). Residues Arg333 and Lys351 each coordinate UDP-N-acetyl-alpha-D-glucosamine. His363 serves as the catalytic Proton acceptor. The UDP-N-acetyl-alpha-D-glucosamine site is built by Tyr366 and Asn377. Acetyl-CoA contacts are provided by residues 386 to 387, Ala423, and Arg440; that span reads NY.

This sequence in the N-terminal section; belongs to the N-acetylglucosamine-1-phosphate uridyltransferase family. In the C-terminal section; belongs to the transferase hexapeptide repeat family. Homotrimer. It depends on Mg(2+) as a cofactor.

It localises to the cytoplasm. The catalysed reaction is alpha-D-glucosamine 1-phosphate + acetyl-CoA = N-acetyl-alpha-D-glucosamine 1-phosphate + CoA + H(+). It catalyses the reaction N-acetyl-alpha-D-glucosamine 1-phosphate + UTP + H(+) = UDP-N-acetyl-alpha-D-glucosamine + diphosphate. It participates in nucleotide-sugar biosynthesis; UDP-N-acetyl-alpha-D-glucosamine biosynthesis; N-acetyl-alpha-D-glucosamine 1-phosphate from alpha-D-glucosamine 6-phosphate (route II): step 2/2. Its pathway is nucleotide-sugar biosynthesis; UDP-N-acetyl-alpha-D-glucosamine biosynthesis; UDP-N-acetyl-alpha-D-glucosamine from N-acetyl-alpha-D-glucosamine 1-phosphate: step 1/1. It functions in the pathway bacterial outer membrane biogenesis; LPS lipid A biosynthesis. In terms of biological role, catalyzes the last two sequential reactions in the de novo biosynthetic pathway for UDP-N-acetylglucosamine (UDP-GlcNAc). The C-terminal domain catalyzes the transfer of acetyl group from acetyl coenzyme A to glucosamine-1-phosphate (GlcN-1-P) to produce N-acetylglucosamine-1-phosphate (GlcNAc-1-P), which is converted into UDP-GlcNAc by the transfer of uridine 5-monophosphate (from uridine 5-triphosphate), a reaction catalyzed by the N-terminal domain. The chain is Bifunctional protein GlmU from Geobacillus thermodenitrificans (strain NG80-2).